The chain runs to 529 residues: MQQPRPIRRALLSVSDKAGIVEFAEALSQRGVELLSTGGTARLLADAGLPVTEVSDYTGFPEMMDGRVKTLHPKVHGGILGRRGQDDAIMGQHDIKPIDMVVVNLYPFAQTVARPNCSLEDAVENIDIGGPTMVRSAAKNHKDVAIVVKSSDYAAIITEMDNNDGSLQYTTRFDLAIKAFEHTAAYDSMIANYFGALVPAYHGDTEQPAGRFPRTLNLNYIKKQDMRYGENSHQQAAFYIEENVQEASVATAEQLQGKALSYNNIADTDAALECVKEFAEPACVIVKHANPCGVAIGDDILSAYERAYQTDPTSAFGGIIAFNRELDAATAQAIISRQFVEVIIAPSISQEARSLLAAKQNVRVLACGQWQQRIAALDFKRVNGGLLVQDRDLGMVSEGDLRVVSERQPTAQELRDALFCWKVAKFVKSNAIVYARDNMTIGIGAGQMSRVYSAKIAGIKAADEGLEVKGSAMASDAFFPFRDGIDAAAAVGISCVIQPGGSIRDDEVIAAANEHGIAMIFTDMRHFRH.

The 148-residue stretch at 1–148 (MQQPRPIRRA…KNHKDVAIVV (148 aa)) folds into the MGS-like domain.

It belongs to the PurH family.

The catalysed reaction is (6R)-10-formyltetrahydrofolate + 5-amino-1-(5-phospho-beta-D-ribosyl)imidazole-4-carboxamide = 5-formamido-1-(5-phospho-D-ribosyl)imidazole-4-carboxamide + (6S)-5,6,7,8-tetrahydrofolate. The enzyme catalyses IMP + H2O = 5-formamido-1-(5-phospho-D-ribosyl)imidazole-4-carboxamide. It functions in the pathway purine metabolism; IMP biosynthesis via de novo pathway; 5-formamido-1-(5-phospho-D-ribosyl)imidazole-4-carboxamide from 5-amino-1-(5-phospho-D-ribosyl)imidazole-4-carboxamide (10-formyl THF route): step 1/1. Its pathway is purine metabolism; IMP biosynthesis via de novo pathway; IMP from 5-formamido-1-(5-phospho-D-ribosyl)imidazole-4-carboxamide: step 1/1. This is Bifunctional purine biosynthesis protein PurH from Serratia proteamaculans (strain 568).